The primary structure comprises 117 residues: Ribonuclease P protein component (117 aa).

Belongs to the RnpA family. In terms of assembly, consists of a catalytic RNA component (M1 or rnpB) and a protein subunit.

The catalysed reaction is Endonucleolytic cleavage of RNA, removing 5'-extranucleotides from tRNA precursor.. Functionally, RNaseP catalyzes the removal of the 5'-leader sequence from pre-tRNA to produce the mature 5'-terminus. It can also cleave other RNA substrates such as 4.5S RNA. The protein component plays an auxiliary but essential role in vivo by binding to the 5'-leader sequence and broadening the substrate specificity of the ribozyme. This Lactococcus lactis subsp. cremoris (strain MG1363) protein is Ribonuclease P protein component.